We begin with the raw amino-acid sequence, 189 residues long: Crossover junction endodeoxyribonuclease RuvC (189 aa).

Residues D7, E68, and D141 contribute to the active site. 3 residues coordinate Mg(2+): D7, E68, and D141.

Belongs to the RuvC family. As to quaternary structure, homodimer which binds Holliday junction (HJ) DNA. The HJ becomes 2-fold symmetrical on binding to RuvC with unstacked arms; it has a different conformation from HJ DNA in complex with RuvA. In the full resolvosome a probable DNA-RuvA(4)-RuvB(12)-RuvC(2) complex forms which resolves the HJ. Mg(2+) serves as cofactor.

It localises to the cytoplasm. It catalyses the reaction Endonucleolytic cleavage at a junction such as a reciprocal single-stranded crossover between two homologous DNA duplexes (Holliday junction).. The RuvA-RuvB-RuvC complex processes Holliday junction (HJ) DNA during genetic recombination and DNA repair. Endonuclease that resolves HJ intermediates. Cleaves cruciform DNA by making single-stranded nicks across the HJ at symmetrical positions within the homologous arms, yielding a 5'-phosphate and a 3'-hydroxyl group; requires a central core of homology in the junction. The consensus cleavage sequence is 5'-(A/T)TT(C/G)-3'. Cleavage occurs on the 3'-side of the TT dinucleotide at the point of strand exchange. HJ branch migration catalyzed by RuvA-RuvB allows RuvC to scan DNA until it finds its consensus sequence, where it cleaves and resolves the cruciform DNA. The polypeptide is Crossover junction endodeoxyribonuclease RuvC (Nocardia farcinica (strain IFM 10152)).